The chain runs to 566 residues: Viral IRF3-like protein (566 aa).

Disordered stretches follow at residues 151-170 (PRPFVGENSDSSEEDHPAFC) and 176-236 (QTGA…VHTD).

This sequence belongs to the IRF family. As to quaternary structure, interacts with host SKP2. Interacts with host USP7.

Functionally, plays a role in the inhibition of host immune response. Interferes with the transactivating potential of cellular IRFs IRF3 and IRF7 that play a critical role in the induction of IFNA and IFNB genes. Additionally, interferes with surface major histocompatibility complex class II (MHC-II) antigen presentation. This is Viral IRF3-like protein (vIRF-3) from Human herpesvirus 8 type P (isolate GK18) (HHV-8).